Reading from the N-terminus, the 829-residue chain is Leucine--tRNA ligase (829 aa).

A 'HIGH' region motif is present at residues 34-44 (PYPSGNIHMGH). The 'KMSKS' region signature appears at 591–595 (KMSKS). Residue Lys594 coordinates ATP.

Belongs to the class-I aminoacyl-tRNA synthetase family.

It localises to the cytoplasm. It carries out the reaction tRNA(Leu) + L-leucine + ATP = L-leucyl-tRNA(Leu) + AMP + diphosphate. This chain is Leucine--tRNA ligase, found in Ehrlichia chaffeensis (strain ATCC CRL-10679 / Arkansas).